A 615-amino-acid chain; its full sequence is Protein DlpA (615 aa).

The protein belongs to the isocitrate and isopropylmalate dehydrogenases family. This sequence to M.jannaschii MJ0644 in the C-terminal section.

This Legionella pneumophila subsp. pneumophila (strain Philadelphia 1 / ATCC 33152 / DSM 7513) protein is Protein DlpA (dlpA).